Reading from the N-terminus, the 246-residue chain is DNA repair protein RecO (246 aa).

This sequence belongs to the RecO family.

Involved in DNA repair and RecF pathway recombination. The polypeptide is DNA repair protein RecO (Methylorubrum extorquens (strain CM4 / NCIMB 13688) (Methylobacterium extorquens)).